The primary structure comprises 256 residues: Small ribosomal subunit protein eS1 (256 aa).

A compositionally biased stretch (basic residues) spans 1-18 (MAVGKNKRLSKGKKGIKK). Residues 1–20 (MAVGKNKRLSKGKKGIKKRT) are disordered. Ala-2 carries the N-acetylalanine; partial modification.

Belongs to the eukaryotic ribosomal protein eS1 family. In terms of assembly, component of the small ribosomal subunit. Mature ribosomes consist of a small (40S) and a large (60S) subunit. The 40S subunit contains about 33 different proteins and 1 molecule of RNA (18S). The 60S subunit contains about 49 different proteins and 3 molecules of RNA (25S, 5.8S and 5S).

Its subcellular location is the cytoplasm. The chain is Small ribosomal subunit protein eS1 (rps1) from Aspergillus terreus (strain NIH 2624 / FGSC A1156).